A 167-amino-acid polypeptide reads, in one-letter code: Endoribonuclease YbeY (167 aa).

Residues His-131, His-135, and His-141 each contribute to the Zn(2+) site.

It belongs to the endoribonuclease YbeY family. The cofactor is Zn(2+).

Its subcellular location is the cytoplasm. Its function is as follows. Single strand-specific metallo-endoribonuclease involved in late-stage 70S ribosome quality control and in maturation of the 3' terminus of the 16S rRNA. This is Endoribonuclease YbeY from Rickettsia prowazekii (strain Madrid E).